The following is a 119-amino-acid chain: Protein sigma-1-small (119 aa).

This sequence belongs to the orthoreovirus sigma-1s protein family.

The sequence is that of Protein sigma-1-small (S1) from Mammalia (T1L).